The primary structure comprises 137 residues: Protein MGF 110-7L (137 aa).

A signal peptide spans 1 to 20 (MLVIILGVIGLLASSNLVSS). Asn69, Asn70, and Asn105 each carry an N-linked (GlcNAc...) asparagine; by host glycan.

Belongs to the asfivirus MGF 110 family.

Its function is as follows. Plays a role in virus cell tropism, and may be required for efficient virus replication in macrophages. The protein is Protein MGF 110-7L of African swine fever virus (isolate Pig/Kenya/KEN-50/1950) (ASFV).